We begin with the raw amino-acid sequence, 294 residues long: 4-hydroxy-tetrahydrodipicolinate synthase (294 aa).

T47 serves as a coordination point for pyruvate. Y135 (proton donor/acceptor) is an active-site residue. K163 acts as the Schiff-base intermediate with substrate in catalysis. T205 lines the pyruvate pocket.

The protein belongs to the DapA family. As to quaternary structure, homotetramer; dimer of dimers.

Its subcellular location is the cytoplasm. The enzyme catalyses L-aspartate 4-semialdehyde + pyruvate = (2S,4S)-4-hydroxy-2,3,4,5-tetrahydrodipicolinate + H2O + H(+). Its pathway is amino-acid biosynthesis; L-lysine biosynthesis via DAP pathway; (S)-tetrahydrodipicolinate from L-aspartate: step 3/4. Functionally, catalyzes the condensation of (S)-aspartate-beta-semialdehyde [(S)-ASA] and pyruvate to 4-hydroxy-tetrahydrodipicolinate (HTPA). The protein is 4-hydroxy-tetrahydrodipicolinate synthase of Rickettsia conorii (strain ATCC VR-613 / Malish 7).